An 89-amino-acid chain; its full sequence is Large ribosomal subunit protein bL27 (89 aa).

The tract at residues 1–23 (MAHKKAGGSSRNGRDSESKRLGV) is disordered.

This sequence belongs to the bacterial ribosomal protein bL27 family.

The protein is Large ribosomal subunit protein bL27 of Rhizobium meliloti (strain 1021) (Ensifer meliloti).